The chain runs to 349 residues: MAFKIASSPHVTRNLHTSTVMQRVILCLLPGLVVQCAFFGWGTLIQVLLAIIVALSCEAAVMKLRNRSIKASLSDNSAMLTAILIGVAIPPLAPWWMIVMGTVFAIVIVKHLYGGLGHNLFNPAMAAYVLLLVSFPVQMTSWIAPSTVALNTPSVIDSLQLIFNVGAHGGMEQFRLGIDGISMATPLDTLKTDLSLGLTTTESMAKSIFDGGTGVGWFWVNLAYLAGGLVLLKLKAIRWHISTGVLAGLFVASSIGFLLSPDTQASPLFHLFSGATMLAAFFIATDPVTAATSPRGRLIFGALIGVLVYVIRTQGGYPDAFAFAVLLANLCAPFIDYYVRPRTYGHSAP.

Transmembrane regions (helical) follow at residues Cys-36–Ser-56, Ser-77–Val-99, and Ala-124–Ala-144. At Thr-185 the chain carries FMN phosphoryl threonine. A run of 5 helical transmembrane segments spans residues Gly-212–Leu-232, Trp-239–Leu-259, Ala-265–Thr-285, Ala-291–Ile-311, and Gly-315–Ile-335.

The protein belongs to the NqrB/RnfD family. In terms of assembly, the complex is composed of six subunits: RnfA, RnfB, RnfC, RnfD, RnfE and RnfG. It depends on FMN as a cofactor.

It is found in the cell inner membrane. Part of a membrane-bound complex that couples electron transfer with translocation of ions across the membrane. The protein is Ion-translocating oxidoreductase complex subunit D of Shewanella sp. (strain MR-4).